A 160-amino-acid chain; its full sequence is Phosphopantetheine adenylyltransferase (160 aa).

Ser9 is a binding site for substrate. ATP is bound by residues Ser9–Phe10 and His17. Substrate is bound by residues Lys41, Leu73, and Arg87. ATP is bound by residues Gly88 to Arg90, Glu98, and Tyr123 to Ser129.

Belongs to the bacterial CoaD family. In terms of assembly, homohexamer. Requires Mg(2+) as cofactor.

It is found in the cytoplasm. It carries out the reaction (R)-4'-phosphopantetheine + ATP + H(+) = 3'-dephospho-CoA + diphosphate. The protein operates within cofactor biosynthesis; coenzyme A biosynthesis; CoA from (R)-pantothenate: step 4/5. Its function is as follows. Reversibly transfers an adenylyl group from ATP to 4'-phosphopantetheine, yielding dephospho-CoA (dPCoA) and pyrophosphate. The polypeptide is Phosphopantetheine adenylyltransferase (Dictyoglomus turgidum (strain DSM 6724 / Z-1310)).